A 212-amino-acid chain; its full sequence is MKRPALILICLLLQACSATTKELGNSLWDSLFGTPGVQLTDDDIQNMPYASQYMQLNGGPQLFVVLAFAEDGQQKWVTQDQATLVTQHGRLVKTLLGGDNLIEVNNLAADPLIKPAQIVDGASWTRTMGWTEYQQVRYATARSVFKWDGTDTVKVGSDETPVRVLDEEVSTDQARWHNRYWIDSEGQIRQSEQYLGADYFPVKTTLIKAAKQ.

Positions 1-15 are cleaved as a signal peptide; that stretch reads MKRPALILICLLLQA. Cys16 carries the N-palmitoyl cysteine lipid modification. The S-diacylglycerol cysteine moiety is linked to residue Cys16.

It to E.coli YmcC.

The protein localises to the cell membrane. This is an uncharacterized protein from Escherichia coli (strain K12).